The following is a 176-amino-acid chain: Ribosome maturation factor RimM (176 aa).

Positions 100–173 (EGEFHLLDLV…WLRLTPPPGL (74 aa)) constitute a PRC barrel domain.

Belongs to the RimM family. Binds ribosomal protein uS19.

The protein resides in the cytoplasm. An accessory protein needed during the final step in the assembly of 30S ribosomal subunit, possibly for assembly of the head region. Essential for efficient processing of 16S rRNA. May be needed both before and after RbfA during the maturation of 16S rRNA. It has affinity for free ribosomal 30S subunits but not for 70S ribosomes. The protein is Ribosome maturation factor RimM of Prochlorococcus marinus (strain MIT 9313).